The sequence spans 267 residues: Formamidopyrimidine-DNA glycosylase (267 aa).

The Schiff-base intermediate with DNA role is filled by P2. E3 serves as the catalytic Proton donor. K53 (proton donor; for beta-elimination activity) is an active-site residue. H82 and R100 together coordinate DNA. An FPG-type zinc finger spans residues 230–264 (AVYGREGLPCPACGRPVERRVVAGRGTHFCPTCQG). The Proton donor; for delta-elimination activity role is filled by R254.

The protein belongs to the FPG family. As to quaternary structure, monomer. Zn(2+) serves as cofactor.

The enzyme catalyses Hydrolysis of DNA containing ring-opened 7-methylguanine residues, releasing 2,6-diamino-4-hydroxy-5-(N-methyl)formamidopyrimidine.. The catalysed reaction is 2'-deoxyribonucleotide-(2'-deoxyribose 5'-phosphate)-2'-deoxyribonucleotide-DNA = a 3'-end 2'-deoxyribonucleotide-(2,3-dehydro-2,3-deoxyribose 5'-phosphate)-DNA + a 5'-end 5'-phospho-2'-deoxyribonucleoside-DNA + H(+). Its function is as follows. Involved in base excision repair of DNA damaged by oxidation or by mutagenic agents. Acts as a DNA glycosylase that recognizes and removes damaged bases. Has a preference for oxidized purines, such as 7,8-dihydro-8-oxoguanine (8-oxoG). Has AP (apurinic/apyrimidinic) lyase activity and introduces nicks in the DNA strand. Cleaves the DNA backbone by beta-delta elimination to generate a single-strand break at the site of the removed base with both 3'- and 5'-phosphates. In Thermus thermophilus (strain ATCC BAA-163 / DSM 7039 / HB27), this protein is Formamidopyrimidine-DNA glycosylase.